The following is a 272-amino-acid chain: NH(3)-dependent NAD(+) synthetase (272 aa).

45–52 (GISGGQDS) is an ATP binding site. Mg(2+) is bound at residue Asp51. Arg138 provides a ligand contact to deamido-NAD(+). Thr158 contacts ATP. Mg(2+) is bound at residue Glu163. Lys171 and Asp178 together coordinate deamido-NAD(+). ATP-binding residues include Lys187 and Thr209. A deamido-NAD(+)-binding site is contributed by 258-259 (HK).

The protein belongs to the NAD synthetase family. As to quaternary structure, homodimer.

It carries out the reaction deamido-NAD(+) + NH4(+) + ATP = AMP + diphosphate + NAD(+) + H(+). The protein operates within cofactor biosynthesis; NAD(+) biosynthesis; NAD(+) from deamido-NAD(+) (ammonia route): step 1/1. Functionally, catalyzes the ATP-dependent amidation of deamido-NAD to form NAD. Uses ammonia as a nitrogen source. In Bacillus mycoides (strain KBAB4) (Bacillus weihenstephanensis), this protein is NH(3)-dependent NAD(+) synthetase.